The primary structure comprises 996 residues: PDZ domain-containing protein C23G3.12c (996 aa).

The segment at 1–35 (MSIKKRARAGSKSDDIGNKTPKKNGIEHEATKSSE) is disordered. 3 consecutive PDZ domains span residues 280–358 (SRLG…QRGS), 745–827 (EFRA…LREG), and 860–930 (RAVR…STFD). Residues 972-996 (KNPSMGFTIDEEVDDNTFDTEGEQQ) form a disordered region. Positions 980–996 (IDEEVDDNTFDTEGEQQ) are enriched in acidic residues.

This sequence belongs to the peptidase S1C family.

In Schizosaccharomyces pombe (strain 972 / ATCC 24843) (Fission yeast), this protein is PDZ domain-containing protein C23G3.12c.